The sequence spans 301 residues: Diaminopimelate epimerase (301 aa).

The substrate site is built by Asn15, Gln47, and Asn67. Cys76 acts as the Proton donor in catalysis. Substrate is bound by residues 77 to 78, Asn163, Asn197, and 215 to 216; these read GN and ER. Catalysis depends on Cys224, which acts as the Proton acceptor. Substrate is bound at residue 225–226; sequence GS.

This sequence belongs to the diaminopimelate epimerase family. In terms of assembly, homodimer.

Its subcellular location is the cytoplasm. It catalyses the reaction (2S,6S)-2,6-diaminopimelate = meso-2,6-diaminopimelate. It participates in amino-acid biosynthesis; L-lysine biosynthesis via DAP pathway; DL-2,6-diaminopimelate from LL-2,6-diaminopimelate: step 1/1. Functionally, catalyzes the stereoinversion of LL-2,6-diaminopimelate (L,L-DAP) to meso-diaminopimelate (meso-DAP), a precursor of L-lysine and an essential component of the bacterial peptidoglycan. The protein is Diaminopimelate epimerase of Rhizobium rhizogenes (strain K84 / ATCC BAA-868) (Agrobacterium radiobacter).